Consider the following 196-residue polypeptide: RNA-binding protein with multiple splicing (196 aa).

An N-acetylmethionine modification is found at methionine 1. Threonine 12 is subject to Phosphothreonine. Residues 24 to 101 (RTLFVSGLPL…QTLRLEFAKA (78 aa)) form the RRM domain. An interaction with RNA region spans residues 98–105 (FAKANTKM). Residue threonine 113 is modified to Phosphothreonine.

In terms of assembly, homodimer; each protein chain binds one RNA molecule via the external surface of the homodimer. Interacts with RNA binding proteins MBNL1, RBFOX2, RBM4 and RBM14; the interaction allows cooperative assembly of stable cell-specific alternative splicing regulatory complexes. Interacts with SMAD2, SMAD3 and SMAD4; the interactions are direct. In terms of tissue distribution, ubiquitously expressed, at various levels depending on the isoform and the tissue. Strongly expressed in the heart, prostate, small intestine, large intestine, and ovary; moderately expressed in the placenta, lung, liver, kidney, pancreas, and testis; and poorly expressed in the skeletal muscle, spleen, thymus and peripheral leukocytes.

Its subcellular location is the nucleus. The protein resides in the cytoplasm. It localises to the stress granule. It is found in the P-body. RNA binding protein that mediates the regulation of pre-mRNA alternative splicing (AS). Acts either as activator (FLNB, HSPG2, LIPA1, MYOCD, PTPRF and PPFIBP1) or repressor (TPM1, ACTN1, ITGA7, PIEZO1, LSM14B, MBNL1 and MBML2) of splicing events on specific pre-mRNA targets. Together with RNA binding proteins RBFOX2 and MBNL1/2, activates a splicing program associated with differentiated contractile vascular smooth muscle cells (SMC) by regulating AS of numerous pre-mRNA involved in actin cytoskeleton and focal adhesion machineries, suggesting a role in promoting a cell differentiated state. Binds to introns, exons and 3'-UTR associated with tandem CAC trinucleotide motifs separated by a variable spacer region, at a minimum as a dimer. The minimal length of RNA required for RBPMS-binding tandem CAC motifs is 15 nt, with spacing ranging from 1 to 9 nt. Can also bind to CA dinucleotide repeats. Mediates repression of TPM1 exon 3 by binding to CAC tandem repeats in the flanking intronic regions, followed by higher-order oligomerization and heterotypic interactions with other splicing regulators including MBNL1 and RBFOX2, which prevents assembly of ATP-dependent splicing complexes. In terms of biological role, acts as a regulator of pre-mRNA alternative splicing (AS). Binds mRNA. Regulates AS of ACTN1, FLNB, although with lower efficiency than isoform A / RBPMSA. Acts as coactivator of SMAD transcriptional activity in a TGFB1-dependent manner, possibly through increased phosphorylation of SMAD2 and SMAD3 at the C-terminal SSXS regions and promotion of the nuclear accumulation of SMAD proteins. The chain is RNA-binding protein with multiple splicing from Homo sapiens (Human).